Reading from the N-terminus, the 175-residue chain is Protein FAM89A (175 aa).

Residues Phe141–Ile175 are disordered. The span at Arg157–Asp169 shows a compositional bias: polar residues.

It belongs to the FAM89 family.

This is Protein FAM89A (Fam89a) from Mus musculus (Mouse).